Here is a 305-residue protein sequence, read N- to C-terminus: Coenzyme PQQ synthesis protein B (305 aa).

The protein belongs to the PqqB family.

The protein operates within cofactor biosynthesis; pyrroloquinoline quinone biosynthesis. Functionally, may be involved in the transport of PQQ or its precursor to the periplasm. The chain is Coenzyme PQQ synthesis protein B from Cupriavidus necator (strain ATCC 17699 / DSM 428 / KCTC 22496 / NCIMB 10442 / H16 / Stanier 337) (Ralstonia eutropha).